Here is a 546-residue protein sequence, read N- to C-terminus: Oncoprotein-induced transcript 3 protein (546 aa).

The N-terminal stretch at 1–19 is a signal peptide; the sequence is MPLSLLLTCLSTTVTLVSP. 2 N-linked (GlcNAc...) asparagine glycosylation sites follow: asparagine 89 and asparagine 116. Residues 182-222 form the EGF-like; calcium-binding domain; that stretch reads DENECEHNNGGCSEICVNLKNSHRCACGVGRVLRSDGKTCE. 3 disulfide bridges follow: cysteine 186–cysteine 197, cysteine 193–cysteine 206, and cysteine 208–cysteine 221. The ZP domain maps to 261–516; the sequence is TCQVPVLCKS…SRCAQGCHRR (256 aa). An N-linked (GlcNAc...) asparagine glycan is attached at asparagine 299.

In terms of tissue distribution, liver-specific. Expressed only in the hepatocytes.

The protein resides in the nucleus envelope. Its function is as follows. May be involved in hepatocellular function and development. The chain is Oncoprotein-induced transcript 3 protein (Oit3) from Mus musculus (Mouse).